We begin with the raw amino-acid sequence, 322 residues long: MLNSFKLSLQYILPKLWLTRLAGWGASKRAGWLTKLVIDLFVKYYKVDMTEAQKPDTASYRTFNDFFVRPLRDDVRPLNTDPNILVMPADGVISQLGRIEEDKILQAKGHNYSLEALLAGNYLMADKFRNGTFVTTYLSPRDYHRVHMPCNGILREMIYVPGDLFSVNHLTAQNVPNLFARNERVICLFDTEFGPMAQILVGATIVGSIETVWAGTITPPREGIIKRWTWPEGEHEGSVALLKGQEMGRFKLGSTVINLFAPGKVNLIASLASLSVTKIGQPLATSTETFVAPEVEPAPLPADEIKAEHDASPLVDNKKDDT.

Active-site charge relay system; for autoendoproteolytic cleavage activity residues include D90, H147, and S254. S254 (schiff-base intermediate with substrate; via pyruvic acid; for decarboxylase activity) is an active-site residue. Pyruvic acid (Ser); by autocatalysis is present on S254. A disordered region spans residues E294–T322. The segment covering D303 to T322 has biased composition (basic and acidic residues).

It belongs to the phosphatidylserine decarboxylase family. PSD-B subfamily. Prokaryotic type I sub-subfamily. Heterodimer of a large membrane-associated beta subunit and a small pyruvoyl-containing alpha subunit. Pyruvate is required as a cofactor. Is synthesized initially as an inactive proenzyme. Formation of the active enzyme involves a self-maturation process in which the active site pyruvoyl group is generated from an internal serine residue via an autocatalytic post-translational modification. Two non-identical subunits are generated from the proenzyme in this reaction, and the pyruvate is formed at the N-terminus of the alpha chain, which is derived from the carboxyl end of the proenzyme. The autoendoproteolytic cleavage occurs by a canonical serine protease mechanism, in which the side chain hydroxyl group of the serine supplies its oxygen atom to form the C-terminus of the beta chain, while the remainder of the serine residue undergoes an oxidative deamination to produce ammonia and the pyruvoyl prosthetic group on the alpha chain. During this reaction, the Ser that is part of the protease active site of the proenzyme becomes the pyruvoyl prosthetic group, which constitutes an essential element of the active site of the mature decarboxylase.

It localises to the cell membrane. It catalyses the reaction a 1,2-diacyl-sn-glycero-3-phospho-L-serine + H(+) = a 1,2-diacyl-sn-glycero-3-phosphoethanolamine + CO2. It functions in the pathway phospholipid metabolism; phosphatidylethanolamine biosynthesis; phosphatidylethanolamine from CDP-diacylglycerol: step 2/2. Its function is as follows. Catalyzes the formation of phosphatidylethanolamine (PtdEtn) from phosphatidylserine (PtdSer). This chain is Phosphatidylserine decarboxylase proenzyme, found in Salmonella paratyphi C (strain RKS4594).